The chain runs to 133 residues: Vascular endothelial growth factor homolog (133 aa).

A signal peptide spans 1 to 20; the sequence is MKLLVGILVAVCLHQYLLNA. 3 cysteine pairs are disulfide-bonded: Cys36/Cys78, Cys67/Cys112, and Cys71/Cys114. N-linked (GlcNAc...) asparagine; by host glycosylation is present at Asn85.

It belongs to the PDGF/VEGF growth factor family. Homodimer; disulfide-linked.

It localises to the secreted. Its function is as follows. Induces endothelial proliferation. This Orf virus (strain NZ2) (OV NZ-2) protein is Vascular endothelial growth factor homolog.